The following is a 206-amino-acid chain: Probable thymidylate kinase (206 aa).

7 to 14 (GIDGSGKS) lines the ATP pocket.

This sequence belongs to the thymidylate kinase family.

It catalyses the reaction dTMP + ATP = dTDP + ADP. This Methanospirillum hungatei JF-1 (strain ATCC 27890 / DSM 864 / NBRC 100397 / JF-1) protein is Probable thymidylate kinase.